The following is a 314-amino-acid chain: Aspartate carbamoyltransferase catalytic subunit (314 aa).

2 residues coordinate carbamoyl phosphate: Arg58 and Thr59. Lys86 provides a ligand contact to L-aspartate. Arg108, His136, and Gln139 together coordinate carbamoyl phosphate. L-aspartate is bound by residues Arg169 and Arg223. Carbamoyl phosphate is bound by residues Gly264 and Pro265.

Belongs to the aspartate/ornithine carbamoyltransferase superfamily. ATCase family. In terms of assembly, heterododecamer (2C3:3R2) of six catalytic PyrB chains organized as two trimers (C3), and six regulatory PyrI chains organized as three dimers (R2).

The enzyme catalyses carbamoyl phosphate + L-aspartate = N-carbamoyl-L-aspartate + phosphate + H(+). The protein operates within pyrimidine metabolism; UMP biosynthesis via de novo pathway; (S)-dihydroorotate from bicarbonate: step 2/3. In terms of biological role, catalyzes the condensation of carbamoyl phosphate and aspartate to form carbamoyl aspartate and inorganic phosphate, the committed step in the de novo pyrimidine nucleotide biosynthesis pathway. This Roseobacter denitrificans (strain ATCC 33942 / OCh 114) (Erythrobacter sp. (strain OCh 114)) protein is Aspartate carbamoyltransferase catalytic subunit.